The primary structure comprises 485 residues: MTAKSVMVLGTTSNAGKSWLTTALCRYYARQGLKVAPYKSQNMSNNARVVVGGEIGSAQYFQALAARAVPDVRMNPLLLKPEKDTQSQVVLMGQVNAELSRMEWRGRSLSVWPVVARALDELLAENDVVVIEGAGSPAEINLKSCDIVNMRVALHANAACLLVTDIDRGGAFAHLYGTWAMLDKTEQQLIRGFVLNKFRGDASLLAPGPQMLQELTGVPTVATLPMWWQHGLPEEDGVFDDRSTAAGAVTQTVAVIAYPRISNLDEFQPLKNVPGVRLKWVRSPSELAGLGPADWVILPGSKATSADLAWLRAQGLDQAIAAHAGRGGAVLGICGGLQMLGEALIDPHGIDGNGPGLGLLPVVTVFDEAKTVQHRQAAFASVGGPWAGLSGVEVQGYEIHHGQTARHSAMAAAGDIACPVMPDGLAWQNAAGNVLGLYLHGMFEDPRVLQALFGAATPTLESVFDGLADYIGQHFEPGVLQSLIA.

A GATase cobBQ-type domain is found at 250–448; sequence TQTVAVIAYP…LHGMFEDPRV (199 aa). The active-site Nucleophile is the Cys334. The active site involves His440.

Belongs to the CobB/CobQ family. CobQ subfamily.

It functions in the pathway cofactor biosynthesis; adenosylcobalamin biosynthesis. In terms of biological role, catalyzes amidations at positions B, D, E, and G on adenosylcobyrinic A,C-diamide. NH(2) groups are provided by glutamine, and one molecule of ATP is hydrogenolyzed for each amidation. The protein is Cobyric acid synthase of Polaromonas naphthalenivorans (strain CJ2).